The following is a 201-amino-acid chain: Large ribosomal subunit protein bL25 (201 aa).

This sequence belongs to the bacterial ribosomal protein bL25 family. CTC subfamily. In terms of assembly, part of the 50S ribosomal subunit; part of the 5S rRNA/L5/L18/L25 subcomplex. Contacts the 5S rRNA. Binds to the 5S rRNA independently of L5 and L18.

Functionally, this is one of the proteins that binds to the 5S RNA in the ribosome where it forms part of the central protuberance. The chain is Large ribosomal subunit protein bL25 from Ectopseudomonas mendocina (strain ymp) (Pseudomonas mendocina).